The sequence spans 387 residues: Polyadenylate-binding protein RBP45A (387 aa).

RRM domains follow at residues K60–A140, H154–N233, and T260–S332. Residues W329 to W342 are compositionally biased toward polar residues. Positions W329–Q387 are disordered.

Belongs to the polyadenylate-binding RBP45 family. In terms of assembly, interacts with the poly(A) tail of mRNA in nucleus. Mostly expressed in seedlings, and, to a lower extent, in leaves, stems, and flowers. Present in immature anther tissues (tapetum cells) and mature pollen grains.

The protein resides in the nucleus. Functionally, heterogeneous nuclear ribonucleoprotein (hnRNP)-protein binding the poly(A) tail of mRNA and probably involved in some steps of pre-mRNA maturation. This Arabidopsis thaliana (Mouse-ear cress) protein is Polyadenylate-binding protein RBP45A (RBP45A).